Reading from the N-terminus, the 257-residue chain is High affinity immunoglobulin epsilon receptor subunit alpha (257 aa).

Residues 1-25 (MAPAMESPTLLCVALLFFAPDGVLA) form the signal peptide. The Extracellular segment spans residues 26-205 (VPQKPKVSLN…KAPREKYWLQ (180 aa)). Ig-like domains are found at residues 30–110 (PKVS…EVFS) and 111–193 (DWLL…LNIT). Asn-46, Asn-67, Asn-75, Asn-99, Asn-160, Asn-165, and Asn-191 each carry an N-linked (GlcNAc...) asparagine glycan. A disulfide bond links Cys-51 and Cys-93. Cys-132 and Cys-176 are joined by a disulfide. A helical membrane pass occupies residues 206–224 (FFIPLLVVILFAVDTGLFI). Residues 225–257 (STQQQVTFLLKIKRTRKGFRLLNPHPKPNPKNN) lie on the Cytoplasmic side of the membrane.

As to quaternary structure, tetramer of an alpha chain, a beta chain, and two disulfide linked gamma chains. Interacts with IGHE (via CH3 region). As to expression, expressed in eosinophils.

It is found in the cell membrane. In terms of biological role, high-affinity receptor for immunoglobulin epsilon/IgE. Mediates IgE effector functions in myeloid cells. Upon IgE binding and antigen/allergen cross-linking initiates signaling pathways that lead to myeloid cell activation and differentiation. On mast cells, basophils and eosinophils stimulates the secretion of vasoactive amines, lipid mediators and cytokines that contribute to inflammatory response, tissue remodeling and cytotoxicity against microbes. Triggers the immediate hypersensitivity response to allergens as a host defense mechanism against helminth parasites, pathogenic bacteria and venom toxicity. When dysregulated, it can elicit harmful life-threatening allergic and anaphylactic reactions. The polypeptide is High affinity immunoglobulin epsilon receptor subunit alpha (FCER1A) (Homo sapiens (Human)).